Here is a 302-residue protein sequence, read N- to C-terminus: N(G),N(G)-dimethylarginine dimethylaminohydrolase (302 aa).

Substrate-binding residues include aspartate 102, arginine 127, and arginine 172. Residue histidine 201 is the Proton donor of the active site. The active-site Nucleophile is the cysteine 295.

It belongs to the DDAH family.

It catalyses the reaction N(omega),N(omega)-dimethyl-L-arginine + H2O = dimethylamine + L-citrulline. It carries out the reaction N(omega)-methyl-L-arginine + H2O = L-citrulline + methylamine. Functionally, hydrolyzes N(G),N(G)-dimethyl-L-arginine (ADMA) and N(G)-monomethyl-L-arginine (MMA). The protein is N(G),N(G)-dimethylarginine dimethylaminohydrolase of Mycobacterium tuberculosis (strain ATCC 25618 / H37Rv).